Consider the following 184-residue polypeptide: Protein DESIGUAL 3 (184 aa).

A signal peptide spans 1-24 (MESELGFLVSVVIICADITATVLG). Over residues 34–45 (APHHHHQQHSRH) the composition is skewed to basic residues. The interval 34 to 53 (APHHHHQQHSRHSGSGCRRS) is disordered. 3 helical membrane passes run 62–82 (GVAAMVLLFIVHVLANVLGGC), 99–119 (ILAVAFLVLSWIFFVVSYSTL), and 140–160 (FFLIGGIFCLGHGVVTSAYYV). N180 carries N-linked (GlcNAc...) asparagine glycosylation.

Belongs to the DESIGUAL family. Mainly expressed in roots, inflorescences and developing leaves, and, at low levels, in mature leaves.

The protein localises to the endoplasmic reticulum membrane. Functionally, involved, partially redundantly with VCC/DEAL1 and DEAL2, to ensure bilateral symmetry development and early leaf margin patterning, probably via the regulation of auxin and CUC2 distribution. In Arabidopsis thaliana (Mouse-ear cress), this protein is Protein DESIGUAL 3.